A 507-amino-acid polypeptide reads, in one-letter code: Maturase K (507 aa).

It belongs to the intron maturase 2 family. MatK subfamily.

It localises to the plastid. The protein localises to the chloroplast. Its function is as follows. Usually encoded in the trnK tRNA gene intron. Probably assists in splicing its own and other chloroplast group II introns. In Liriodendron chinense (Chinese tulip tree), this protein is Maturase K.